Here is a 382-residue protein sequence, read N- to C-terminus: Na(+)/H(+) antiporter NhaA 2 (382 aa).

11 consecutive transmembrane segments (helical) span residues 7–27 (MVLS…LALL), 58–78 (LDLW…GLEL), 94–114 (SLPI…FAAI), 124–144 (GWAI…MLLG), 153–173 (LFLL…IALF), 178–198 (LSAL…LLNY), 199–219 (YHIT…IAML), 255–275 (NPWV…GIDI), 291–311 (IILG…FIAI), 327–347 (FYGI…IDGL), and 361–381 (LAIL…LKIV).

It belongs to the NhaA Na(+)/H(+) (TC 2.A.33) antiporter family.

It is found in the cell inner membrane. The catalysed reaction is Na(+)(in) + 2 H(+)(out) = Na(+)(out) + 2 H(+)(in). In terms of biological role, na(+)/H(+) antiporter that extrudes sodium in exchange for external protons. The sequence is that of Na(+)/H(+) antiporter NhaA 2 from Campylobacter jejuni subsp. jejuni serotype O:6 (strain 81116 / NCTC 11828).